The primary structure comprises 732 residues: Adducin-related protein 1 (732 aa).

Disordered stretches follow at residues 1 to 22 (MIGR…DPEY) and 684 to 732 (TRFS…KKDK). Polar residues predominate over residues 685–705 (RFSSTQGTSEGNTTSRSCTTA). Positions 716–732 (KKKKKKGFLSFMRKKDK) are enriched in basic residues.

Belongs to the aldolase class II family. Adducin subfamily.

The protein localises to the cytoplasm. It is found in the cytoskeleton. Its subcellular location is the cell membrane. Functionally, membrane-cytoskeleton-associated protein that promotes the assembly of the spectrin-actin network. Plays a role in time-dependent memmory loss and the retention of conditioned behavior over time. This is Adducin-related protein 1 from Caenorhabditis elegans.